The primary structure comprises 283 residues: MNWTGLYTLLSGVNRHSTAIGRVWLSVIFIFRIMVLVVAAESVWGDEKSSFICNTLQPGCNSVCYDQFFPISHVRLWSLQLILVSTPALLVAMHVAHQQHIEKKMLRLEGHGDPLHLEEVKRHKVHISGTLWWAYVISVVFRLLFEAVFMYVFYLLYPGYAMVRLVKCDVYPCPNTVDCFVSRPTEKTVFTVFMLAASGICIILNVAEVVYLIIRACARRAQRRSNPPSRKGSGFGHRLSPEYKQNEINKLLSEQDGSLKDILRRSPGTGAGLAEKSDRCSAC.

Topologically, residues 1-22 (MNWTGLYTLLSGVNRHSTAIGR) are cytoplasmic. Residues 23–45 (VWLSVIFIFRIMVLVVAAESVWG) form a helical membrane-spanning segment. The Extracellular segment spans residues 46-75 (DEKSSFICNTLQPGCNSVCYDQFFPISHVR). The helical transmembrane segment at 76–95 (LWSLQLILVSTPALLVAMHV) threads the bilayer. The Cytoplasmic portion of the chain corresponds to 96–130 (AHQQHIEKKMLRLEGHGDPLHLEEVKRHKVHISGT). A helical transmembrane segment spans residues 131–153 (LWWAYVISVVFRLLFEAVFMYVF). Residues 154–191 (YLLYPGYAMVRLVKCDVYPCPNTVDCFVSRPTEKTVFT) lie on the Extracellular side of the membrane. The helical transmembrane segment at 192 to 214 (VFMLAASGICIILNVAEVVYLII) threads the bilayer. Topologically, residues 215–283 (RACARRAQRR…AEKSDRCSAC (69 aa)) are cytoplasmic. 4 positions are modified to phosphoserine: Ser233, Ser258, Ser266, and Ser277.

This sequence belongs to the connexin family. Beta-type (group I) subfamily. A connexon is composed of a hexamer of connexins. Interacts with CNST.

The protein localises to the cell membrane. It is found in the cell junction. The protein resides in the gap junction. In terms of biological role, one gap junction consists of a cluster of closely packed pairs of transmembrane channels, the connexons, through which materials of low MW diffuse from one cell to a neighboring cell. This is Gap junction beta-1 protein (GJB1) from Macaca fascicularis (Crab-eating macaque).